Here is a 115-residue protein sequence, read N- to C-terminus: MNLINIIENSQKKSNITKLFSGDIVKINIWVLEGNKKRIQIFEGIIIAIKNKGISSSITVRKISNGEGVERMFPLHSPIIESIIVNRHSLVRKSKLYYLRNKKGRSSRIKQRLKK.

This sequence belongs to the bacterial ribosomal protein bL19 family.

In terms of biological role, this protein is located at the 30S-50S ribosomal subunit interface and may play a role in the structure and function of the aminoacyl-tRNA binding site. The chain is Large ribosomal subunit protein bL19 from Wigglesworthia glossinidia brevipalpis.